An 82-amino-acid polypeptide reads, in one-letter code: Putative membrane protein insertion efficiency factor (82 aa).

This sequence belongs to the UPF0161 family.

It localises to the cell inner membrane. Its function is as follows. Could be involved in insertion of integral membrane proteins into the membrane. In Rickettsia typhi (strain ATCC VR-144 / Wilmington), this protein is Putative membrane protein insertion efficiency factor.